A 476-amino-acid polypeptide reads, in one-letter code: Serine--tRNA ligase (476 aa).

280 to 282 serves as a coordination point for L-serine; sequence TAE. 311-313 contacts ATP; sequence RAE. Position 334 (glutamate 334) interacts with L-serine. Position 401–404 (401–404) interacts with ATP; that stretch reads EISS. Serine 436 lines the L-serine pocket.

The protein belongs to the class-II aminoacyl-tRNA synthetase family. Type-1 seryl-tRNA synthetase subfamily. Homodimer. The tRNA molecule binds across the dimer.

It localises to the cytoplasm. The enzyme catalyses tRNA(Ser) + L-serine + ATP = L-seryl-tRNA(Ser) + AMP + diphosphate + H(+). It carries out the reaction tRNA(Sec) + L-serine + ATP = L-seryl-tRNA(Sec) + AMP + diphosphate + H(+). The protein operates within aminoacyl-tRNA biosynthesis; selenocysteinyl-tRNA(Sec) biosynthesis; L-seryl-tRNA(Sec) from L-serine and tRNA(Sec): step 1/1. In terms of biological role, catalyzes the attachment of serine to tRNA(Ser). Is also able to aminoacylate tRNA(Sec) with serine, to form the misacylated tRNA L-seryl-tRNA(Sec), which will be further converted into selenocysteinyl-tRNA(Sec). In Rhodopseudomonas palustris (strain HaA2), this protein is Serine--tRNA ligase.